Consider the following 311-residue polypeptide: Short chain dehydrogenase opdN (311 aa).

NADP(+)-binding residues include L48, K73, E96, N123, Y217, and K221. Y217 (proton donor) is an active-site residue. K221 functions as the Lowers pKa of active site Tyr in the catalytic mechanism.

This sequence belongs to the short-chain dehydrogenases/reductases (SDR) family.

It functions in the pathway secondary metabolite biosynthesis. Functionally, short chain dehydrogenase; part of the gene cluster that mediates the biosynthesis of oxopyrrolidines, polyketide-amino acid hybrid compounds with feature structures of tetramic acid. Does not seem to play a role in oxopyrrolidines A and B biosynthesis. May be involved in further modifications of these oxopyrrolidines. The chain is Short chain dehydrogenase opdN from Penicillium oxalicum (strain 114-2 / CGMCC 5302) (Penicillium decumbens).